The following is a 578-amino-acid chain: 2-hydroxyacyl-CoA lyase 1 (578 aa).

Ser-4 bears the Phosphoserine mark. Residue Glu-60 coordinates thiamine diphosphate. N6-succinyllysine occurs at positions 351, 358, and 365. Positions 401 to 486 (TMDIGRTVLQ…LLVVNNNGIY (86 aa)) are thiamine pyrophosphate binding. Positions 455 and 482 each coordinate Mg(2+). A Microbody targeting signal motif is present at residues 576 to 578 (SNM).

The protein belongs to the TPP enzyme family. As to quaternary structure, homotetramer. Mg(2+) is required as a cofactor. It depends on thiamine diphosphate as a cofactor. In terms of tissue distribution, widely expressed.

It localises to the peroxisome. The enzyme catalyses a 2-hydroxy-3-methyl fatty acyl-CoA = a 2-methyl-branched fatty aldehyde + formyl-CoA. The catalysed reaction is an (R)-2-hydroxy-long-chain-fatty acyl-CoA = a long-chain fatty aldehyde + formyl-CoA. It carries out the reaction 2-hydroxy-3-methylhexadecanoyl-CoA = 2-methylpentadecanal + formyl-CoA. It catalyses the reaction 2-hydroxyoctadecanoyl-CoA = heptadecanal + formyl-CoA. The enzyme catalyses 2-hydroxyphytanoyl-CoA = 2,6,10,14-tetramethylpentadecanal + formyl-CoA. It participates in lipid metabolism; fatty acid metabolism. Its function is as follows. Peroxisomal 2-OH acyl-CoA lyase involved in the cleavage (C1 removal) reaction in the fatty acid alpha-oxydation in a thiamine pyrophosphate (TPP)-dependent manner. Involved in the degradation of 3-methyl-branched fatty acids like phytanic acid and the shortening of 2-hydroxy long-chain fatty acids. Plays a significant role in the biosynthesis of heptadecanal in the liver. This is 2-hydroxyacyl-CoA lyase 1 from Homo sapiens (Human).